The chain runs to 462 residues: Zinc transporter zipt-7.2 (462 aa).

A helical transmembrane segment spans residues 2–22 (LVKSCIFLSFLAIAAYGQAHL). Residues 39-134 (HHQGHGHAHG…HGHSHGAESA (96 aa)) are disordered. Residues 40 to 51 (HQGHGHAHGGHG) show a composition bias toward basic residues. Residues 65 to 74 (AAAAEAATAA) show a composition bias toward low complexity. Over residues 75-94 (AHDHGHAHDHDHGHAHDHGH) the composition is skewed to basic and acidic residues. Residues 111–120 (HGHAHDHHGH) show a composition bias toward basic residues. Over residues 121–132 (SHEDHGHSHGAE) the composition is skewed to basic and acidic residues. A helical transmembrane segment spans residues 161–181 (AISATLLISAAPCFILMFIPI). A glycan (N-linked (GlcNAc...) asparagine) is linked at N184. The helical transmembrane segment at 194–214 (VLLAFGSGGLLGDAFLHLIPH) threads the bilayer. The tract at residues 219–239 (GDGHGHSHSHGHSHGGGGHSH) is disordered. The helical transmembrane segment at 244–264 (MSVGGWVLGGIIAFLTVEKLV) threads the bilayer. The disordered stretch occupies residues 270 to 307 (EDGHGHSHGHSHGGEKKETKEKDSKDKVAKKEEKPEKD). Residues 281 to 307 (HGGEKKETKEKDSKDKVAKKEEKPEKD) are compositionally biased toward basic and acidic residues. N326 is a glycosylation site (N-linked (GlcNAc...) asparagine). A run of 3 helical transmembrane segments spans residues 333–353 (IGAS…TVLV), 376–396 (AMLI…ISLF), and 410–430 (SWVL…SVIP). N435 is a glycosylation site (N-linked (GlcNAc...) asparagine). A helical membrane pass occupies residues 441 to 461 (TVKEIFAILTGIFLMYLIAIY).

This sequence belongs to the ZIP transporter (TC 2.A.5) family. KE4/Catsup subfamily. In terms of tissue distribution, expressed in somatic tissues.

The protein localises to the membrane. Functionally, zinc transporter. The polypeptide is Zinc transporter zipt-7.2 (Caenorhabditis elegans).